The primary structure comprises 82 residues: Small ribosomal subunit protein eS21z (82 aa).

N-acetylmethionine is present on M1.

This sequence belongs to the eukaryotic ribosomal protein eS21 family.

The sequence is that of Small ribosomal subunit protein eS21z (RPS21B) from Arabidopsis thaliana (Mouse-ear cress).